The following is a 136-amino-acid chain: Large ribosomal subunit protein uL16 (136 aa).

This sequence belongs to the universal ribosomal protein uL16 family. Part of the 50S ribosomal subunit.

In terms of biological role, binds 23S rRNA and is also seen to make contacts with the A and possibly P site tRNAs. The polypeptide is Large ribosomal subunit protein uL16 (Yersinia enterocolitica serotype O:8 / biotype 1B (strain NCTC 13174 / 8081)).